A 319-amino-acid chain; its full sequence is 3-oxoacyl-[acyl-carrier-protein] reductase, chloroplastic (319 aa).

A chloroplast-targeting transit peptide spans Met1–Lys57. Ala58 is subject to N-acetylalanine. Ile81–Val105 contributes to the NADP(+) binding site. A substrate-binding site is contributed by Ser213. Residue Tyr226 is the Proton acceptor of the active site.

It belongs to the short-chain dehydrogenases/reductases (SDR) family. In terms of assembly, homotetramer.

It is found in the plastid. The protein localises to the chloroplast. The catalysed reaction is a (3R)-hydroxyacyl-[ACP] + NADP(+) = a 3-oxoacyl-[ACP] + NADPH + H(+). Its pathway is lipid metabolism; fatty acid biosynthesis. The chain is 3-oxoacyl-[acyl-carrier-protein] reductase, chloroplastic from Arabidopsis thaliana (Mouse-ear cress).